Consider the following 351-residue polypeptide: Dihydroorotate dehydrogenase (quinone) (351 aa).

FMN is bound by residues 67-71 (AGFDK) and T91. Residue K71 coordinates substrate. 116 to 120 (NAMGF) is a binding site for substrate. Residues N145 and N178 each coordinate FMN. N178 serves as a coordination point for substrate. The active-site Nucleophile is the S181. N183 provides a ligand contact to substrate. FMN contacts are provided by K214 and T242. Residue 243 to 244 (NT) coordinates substrate. FMN is bound by residues G262, G291, and 312-313 (YS).

This sequence belongs to the dihydroorotate dehydrogenase family. Type 2 subfamily. Monomer. It depends on FMN as a cofactor.

It localises to the cell membrane. The catalysed reaction is (S)-dihydroorotate + a quinone = orotate + a quinol. Its pathway is pyrimidine metabolism; UMP biosynthesis via de novo pathway; orotate from (S)-dihydroorotate (quinone route): step 1/1. Catalyzes the conversion of dihydroorotate to orotate with quinone as electron acceptor. This chain is Dihydroorotate dehydrogenase (quinone), found in Helicobacter acinonychis (strain Sheeba).